We begin with the raw amino-acid sequence, 69 residues long: Fumarase D (69 aa).

It belongs to the FumD family.

It carries out the reaction (S)-malate = fumarate + H2O. Its function is as follows. In vitro catalyzes the addition of water to fumarate, forming malate. Cannot catalyze the reverse reaction. Cannot use the cis-isomer maleate as substrate. The sequence is that of Fumarase D from Shigella flexneri.